Reading from the N-terminus, the 132-residue chain is Nickel-responsive regulator (132 aa).

Positions 76, 87, 89, and 95 each coordinate Ni(2+).

This sequence belongs to the transcriptional regulatory CopG/NikR family. As to quaternary structure, homotetramer. Ni(2+) is required as a cofactor.

In terms of biological role, transcriptional repressor of the nikABCDE operon. Is active in the presence of excessive concentrations of intracellular nickel. This is Nickel-responsive regulator from Klebsiella pneumoniae subsp. pneumoniae (strain ATCC 700721 / MGH 78578).